Consider the following 508-residue polypeptide: Bifunctional purine biosynthesis protein PurH (508 aa).

The MGS-like domain occupies 1-145 (MAKKALISVS…KNYKYVTILV (145 aa)).

It belongs to the PurH family.

It catalyses the reaction (6R)-10-formyltetrahydrofolate + 5-amino-1-(5-phospho-beta-D-ribosyl)imidazole-4-carboxamide = 5-formamido-1-(5-phospho-D-ribosyl)imidazole-4-carboxamide + (6S)-5,6,7,8-tetrahydrofolate. It carries out the reaction IMP + H2O = 5-formamido-1-(5-phospho-D-ribosyl)imidazole-4-carboxamide. It participates in purine metabolism; IMP biosynthesis via de novo pathway; 5-formamido-1-(5-phospho-D-ribosyl)imidazole-4-carboxamide from 5-amino-1-(5-phospho-D-ribosyl)imidazole-4-carboxamide (10-formyl THF route): step 1/1. Its pathway is purine metabolism; IMP biosynthesis via de novo pathway; IMP from 5-formamido-1-(5-phospho-D-ribosyl)imidazole-4-carboxamide: step 1/1. This is Bifunctional purine biosynthesis protein PurH from Thermoanaerobacter sp. (strain X514).